A 69-amino-acid chain; its full sequence is Putative F-box protein At2g33705 (69 aa).

The F-box domain occupies 14–59; that stretch reads GVNLEQIPYDLVLEILLKLSAKSIARFRCVSKLWDSTFRSRYFTEL.

This Arabidopsis thaliana (Mouse-ear cress) protein is Putative F-box protein At2g33705.